Reading from the N-terminus, the 278-residue chain is Keratin-associated protein 5-1 (278 aa).

Repeat copies occupy residues 42–45 (CCVP), 48–51 (CCKP), 130–133 (CCVP), 136–139 (CCKP), 142–145 (CCVP), 239–242 (CCKP), 258–261 (CCKP), and 268–271 (CCVP). Residues 42 to 271 (CCVPVCCCKP…CCSQSSCCVP (230 aa)) are 8 X 4 AA repeats of C-C-X-P.

Belongs to the KRTAP type 5 family. Interacts with hair keratins. Expressed in hair root but not in skin. Expressed also in lung, pancreas, ovary, testis.

Functionally, in the hair cortex, hair keratin intermediate filaments are embedded in an interfilamentous matrix, consisting of hair keratin-associated protein (KRTAP), which are essential for the formation of a rigid and resistant hair shaft through their extensive disulfide bond cross-linking with abundant cysteine residues of hair keratins. The matrix proteins include the high-sulfur and high-glycine-tyrosine keratins. In Homo sapiens (Human), this protein is Keratin-associated protein 5-1 (KRTAP5-1).